A 1165-amino-acid polypeptide reads, in one-letter code: Vacuolar segregation protein 7 (1165 aa).

Residues 1–919 lie on the Cytoplasmic side of the membrane; that stretch reads MTEEDRKLTV…RKSPFVKVKN (919 aa). The interval 118–147 is disordered; the sequence is SVSSTNNNSNNALINHNPLSSHLSNPSSSL. A Phosphoserine modification is found at Ser-164. 4 disordered regions span residues 215–241, 274–423, 461–497, and 560–668; these read SNNTAPSTSNNIGSNTPPAPLLPLPSL, KAKN…SEKP, LIFPDSSSQQQQQQQQPPKQQQQQQNHGITSKISAPL, and EPPH…KRPL. Residues 216–230 show a composition bias toward polar residues; that stretch reads NNTAPSTSNNIGSNT. A compositionally biased stretch (low complexity) spans 334-345; sequence TTSTKTAPSTAP. The segment covering 346–367 has biased composition (polar residues); the sequence is LGSTDNTQALTASVSSSNADNH. Residues 375 to 391 show a composition bias toward low complexity; it reads SSNNNGNNSNSASNKTN. The span at 393–412 shows a compositional bias: polar residues; sequence DIKNSNADLSASTSNNNAIN. Basic and acidic residues predominate over residues 413-423; it reads DDSHESNSEKP. Low complexity-rich tracts occupy residues 469–485 and 562–571; these read QQQQQQQQPPKQQQQQQ and PHQLQQQQPP. A compositionally biased stretch (polar residues) spans 576–587; it reads SVDSYTSDNPDS. A compositionally biased stretch (low complexity) spans 599–613; that stretch reads SLVSLSKVSPHLLSS. Residues 614–662 show a composition bias toward polar residues; it reads TSSNGNTISCPNVATNSQELEPNNDISTKKSLSNSTLRHSSANRNSNYG. The chain crosses the membrane as a helical; Signal-anchor for type II membrane protein span at residues 920–940; it reads FLYLAFVISSLLMTGFILGFL. At 941-1165 the chain is on the vacuolar side; that stretch reads LATNKELQDV…KDSMVHPGKK (225 aa). N-linked (GlcNAc...) asparagine glycans are attached at residues Asn-1020 and Asn-1099. The disordered stretch occupies residues 1074–1121; that stretch reads SPGSREAKHENDDDDDDDGDDGDDENNTNERQYKSKPNARDDKEDDTK. Over residues 1085–1100 the composition is skewed to acidic residues; sequence DDDDDDDGDDGDDENN. Positions 1111–1121 are enriched in basic and acidic residues; the sequence is NARDDKEDDTK.

In terms of assembly, component of the PI(3,5)P2 regulatory complex, composed of ATG18, FIG4, FAB1, VAC14 and VAC7. VAC14 nucleates the assembly of the complex and serves as a scaffold. Post-translationally, N-glycosylated.

The protein localises to the vacuole membrane. In terms of biological role, the PI(3,5)P2 regulatory complex regulates both the synthesis and turnover of phosphatidylinositol 3,5-bisphosphate (PtdIns(3,5)P2). Positively regulates FAB1 kinase activity. Major activator of FAB1 during hyperosmotic shock and can elevate levels of PtdIns(3,5)P2 in the absence of VAC14 and FIG4. Directly involved in vacuolar membrane scission. Required for normal vacuole acidification, inheritance and morphology. The protein is Vacuolar segregation protein 7 (VAC7) of Saccharomyces cerevisiae (strain ATCC 204508 / S288c) (Baker's yeast).